The sequence spans 398 residues: Acetate kinase (398 aa).

Asn7 lines the Mg(2+) pocket. Lys14 provides a ligand contact to ATP. Arg96 serves as a coordination point for substrate. Asp153 acts as the Proton donor/acceptor in catalysis. Residues 210 to 214 (HLGNG), 284 to 286 (DLR), and 332 to 336 (GIGEH) contribute to the ATP site. Glu385 is a binding site for Mg(2+).

This sequence belongs to the acetokinase family. As to quaternary structure, homodimer. Mg(2+) is required as a cofactor. Mn(2+) serves as cofactor.

It is found in the cytoplasm. The catalysed reaction is acetate + ATP = acetyl phosphate + ADP. It participates in metabolic intermediate biosynthesis; acetyl-CoA biosynthesis; acetyl-CoA from acetate: step 1/2. In terms of biological role, catalyzes the formation of acetyl phosphate from acetate and ATP. Can also catalyze the reverse reaction. The sequence is that of Acetate kinase from Acaryochloris marina (strain MBIC 11017).